We begin with the raw amino-acid sequence, 89 residues long: Large ribosomal subunit protein bL27 (89 aa).

The tract at residues 1-24 is disordered; it reads MAHKKAGGSSRNGRDSAGRRLGVK.

This sequence belongs to the bacterial ribosomal protein bL27 family.

The chain is Large ribosomal subunit protein bL27 from Maricaulis maris (strain MCS10) (Caulobacter maris).